The sequence spans 638 residues: Keratin, type II cytoskeletal 2 oral (638 aa).

The tract at residues 1-182 (MNRQVCKKSF…DPQIGQVKAQ (182 aa)) is head. An omega-N-methylarginine mark is found at Arg-85 and Arg-110. Positions 183 to 218 (EREQIKTLNNKFASFIDKVRFLEQQNKVLETKWELL) are coil 1A. One can recognise an IF rod domain in the interval 183–496 (EREQIKTLNN…KLLEGEECRM (314 aa)). The tract at residues 219-237 (QQQTTGSGPSSLEPCFESY) is linker 1. The tract at residues 238–329 (ISFLCKQLDS…TLYEMELSQM (92 aa)) is coil 1B. Residues 330 to 353 (QSHASDTSVVLSMDNNRCLDLGSI) form a linker 12 region. Residues 354–492 (IAEVRAQYEE…ATYRKLLEGE (139 aa)) form a coil 2 region. The interval 493 to 638 (ECRMSGECQS…TSSSQHSSTK (146 aa)) is tail. The segment at 532–638 (SGSGGYKGGS…TSSSQHSSTK (107 aa)) is disordered. The span at 540-549 (GSSSSSSSGY) shows a compositional bias: low complexity. Residues 550–572 (GVSGGSGSGYGGVSSGSTGGRGS) are compositionally biased toward gly residues. Over residues 573–583 (SGSYQSSSSGS) the composition is skewed to low complexity. Residue Arg-584 is modified to Omega-N-methylarginine. A compositionally biased stretch (low complexity) spans 590-608 (SISVSHSGMGSSSGSIQTS). Gly residues predominate over residues 609–620 (GGSGYKSGGGGS). A compositionally biased stretch (low complexity) spans 626–638 (SQTTSSSQHSSTK).

Belongs to the intermediate filament family. Heterotetramer of two type I and two type II keratins.

Probably contributes to terminal cornification. This Homo sapiens (Human) protein is Keratin, type II cytoskeletal 2 oral (KRT76).